Here is a 173-residue protein sequence, read N- to C-terminus: Small ribosomal subunit protein uS7 (173 aa).

The protein belongs to the universal ribosomal protein uS7 family. Part of the 30S ribosomal subunit. Contacts proteins S9 and S11.

One of the primary rRNA binding proteins, it binds directly to 16S rRNA where it nucleates assembly of the head domain of the 30S subunit. Is located at the subunit interface close to the decoding center, probably blocks exit of the E-site tRNA. The sequence is that of Small ribosomal subunit protein uS7 from Orientia tsutsugamushi (strain Boryong) (Rickettsia tsutsugamushi).